Reading from the N-terminus, the 137-residue chain is Small ribosomal subunit protein uS19 (137 aa).

A disordered region spans residues 115–137 (RNRVSHGSAGVGATRSSKFVPLK).

The protein belongs to the universal ribosomal protein uS19 family.

Functionally, protein S19 forms a complex with S13 that binds strongly to the 16S ribosomal RNA. This Methanococcoides burtonii (strain DSM 6242 / NBRC 107633 / OCM 468 / ACE-M) protein is Small ribosomal subunit protein uS19.